Here is a 316-residue protein sequence, read N- to C-terminus: uncharacterized protein (316 aa).

Positions 1–34 (MATKRKIGDGYSSSDDNQPKRERSEGGEDQQLVP) are disordered. Over residues 17–26 (NQPKRERSEG) the composition is skewed to basic and acidic residues.

This is an uncharacterized protein from Lepidoptera (butterflies and moths).